A 419-amino-acid polypeptide reads, in one-letter code: uncharacterized protein (419 aa).

Transmembrane regions (helical) follow at residues 15–35, 36–56, 77–99, 104–126, 140–160, 166–186, 213–233, 246–266, 282–302, 309–329, 351–371, and 377–397; these read RVLMINQFGINIGFYMLMPYL, ADYLAGPLGLAAWAVGLVMGV, YKPLIIAGCLIRTGGFALLVVAQ, VLIAAAATGFAGALFNPAVRGYL, MFNVFYQSGILLGPLVGLVLL, ITVLAAAGVFGLLTVAQLVAL, FLTLAAAMTGCYALSFQIYLA, QYLLIAAMFAVSGLVAVGGQL, LVVGATILAASFIPVAVIPNG, VAVMALVLSASLLAVASAALF, FYSTIVGVGVLVGNLAIGSLM, and LNTDEIVWGGLILVGIVAVAG.

The protein belongs to the major facilitator superfamily.

Its subcellular location is the cell membrane. This is an uncharacterized protein from Mycobacterium tuberculosis (strain CDC 1551 / Oshkosh).